A 230-amino-acid chain; its full sequence is Uracil-DNA glycosylase (230 aa).

Catalysis depends on Asp72, which acts as the Proton acceptor.

This sequence belongs to the uracil-DNA glycosylase (UDG) superfamily. UNG family.

The protein localises to the cytoplasm. It carries out the reaction Hydrolyzes single-stranded DNA or mismatched double-stranded DNA and polynucleotides, releasing free uracil.. Its function is as follows. Excises uracil residues from the DNA which can arise as a result of misincorporation of dUMP residues by DNA polymerase or due to deamination of cytosine. The polypeptide is Uracil-DNA glycosylase (Wolinella succinogenes (strain ATCC 29543 / DSM 1740 / CCUG 13145 / JCM 31913 / LMG 7466 / NCTC 11488 / FDC 602W) (Vibrio succinogenes)).